Here is a 236-residue protein sequence, read N- to C-terminus: Phosphoribosylaminoimidazole-succinocarboxamide synthase (236 aa).

The protein belongs to the SAICAR synthetase family.

It catalyses the reaction 5-amino-1-(5-phospho-D-ribosyl)imidazole-4-carboxylate + L-aspartate + ATP = (2S)-2-[5-amino-1-(5-phospho-beta-D-ribosyl)imidazole-4-carboxamido]succinate + ADP + phosphate + 2 H(+). Its pathway is purine metabolism; IMP biosynthesis via de novo pathway; 5-amino-1-(5-phospho-D-ribosyl)imidazole-4-carboxamide from 5-amino-1-(5-phospho-D-ribosyl)imidazole-4-carboxylate: step 1/2. The protein is Phosphoribosylaminoimidazole-succinocarboxamide synthase of Rickettsia massiliae (strain Mtu5).